A 492-amino-acid polypeptide reads, in one-letter code: BTB/POZ domain and ankyrin repeat-containing protein NOOT2 (492 aa).

Residues 25–107 form the BTB domain; that stretch reads SDVTFQVEGR…LYSGQVSIVP (83 aa). The segment at 113-127 adopts a C2HC NPR-type zinc-finger fold; the sequence is RPNCGERGCWHTHCT. Zn(2+) is bound by residues Cys-116, Cys-121, His-123, and Cys-126. ANK repeat units lie at residues 248 to 277, 278 to 307, 312 to 341, and 345 to 379; these read QKIRRMRRALDSSDVELVKLMVMGEGLNLD, EALALHYAVENCSREVVKALLELGAADVNY, AGKTSLHVAAEMVSPEMVAVLLDHHADPTV, and DGVTPLDILRTLTSDFLFKGAVPGLNHIEPNKLRL. 2 disordered regions span residues 395 to 439 and 455 to 492; these read ENNA…NSIG and TQMGGDDDNRHNNSHREAMNRQGGHGCDPSMYHHSHDF. Composition is skewed to low complexity over residues 397-413 and 425-439; these read NASNNNNNNNNASSSAA and SSSSGNNNNNNNSIG. The segment covering 461–473 has biased composition (basic and acidic residues); sequence DDNRHNNSHREAM.

Belongs to the plant 'ANKYRIN-BTB/POZ' family. 'NOOT-BOP-COCH-like' (NBCL) subfamily. Homodimer.

It localises to the nucleus. The protein resides in the cytoplasm. Its subcellular location is the cell membrane. Its pathway is protein modification; protein ubiquitination. Functionally, may act as a substrate-specific adapter of an E3 ubiquitin-protein ligase complex (CUL3-RBX1-BTB) which mediates the ubiquitination and subsequent proteasomal degradation of target proteins. Transcriptional co-regulator involved in the promotion of leaf and floral meristem fate and determinacy. Required for the abscission of senescent organs, probably by regulating the cell wall disorganization in abscission zones (AZs, e.g. pulvini at the base of leaves). Involved in the coordination of the symbiotic nodule developmental program; promotes the formation of root nodules by interacting directly with APP1 to modulate the expression of the nuclear transcription factor Y subunit (NF-YA1), a key nodulin. Involved in the regulation of indeterminate nodule identity in association with NOOT1. The sequence is that of BTB/POZ domain and ankyrin repeat-containing protein NOOT2 from Medicago truncatula (Barrel medic).